The sequence spans 184 residues: MIVAVPNSGASRINQSGVEALREFPNFPIGGILFKDIAPMLAGRGALGEVVSTVASQVSGTEIDAILAVDARGFILGASLADRLGCGFIMVRKPGKLPGDVLSFEYSCEYCSGTLEVTAGLIGDGLRCLIADDLLATGGTARATGNFVKSQGGEIAGYAFILEIEVLKGRRQLDDAPVISAMTC.

Belongs to the purine/pyrimidine phosphoribosyltransferase family. In terms of assembly, homodimer.

It localises to the cytoplasm. It catalyses the reaction AMP + diphosphate = 5-phospho-alpha-D-ribose 1-diphosphate + adenine. Its pathway is purine metabolism; AMP biosynthesis via salvage pathway; AMP from adenine: step 1/1. In terms of biological role, catalyzes a salvage reaction resulting in the formation of AMP, that is energically less costly than de novo synthesis. This Rhizobium etli (strain ATCC 51251 / DSM 11541 / JCM 21823 / NBRC 15573 / CFN 42) protein is Adenine phosphoribosyltransferase 2.